The following is a 447-amino-acid chain: Sulfoquinovose isomerase (447 aa).

Belongs to the SqvD family.

The catalysed reaction is 6-sulfo-beta-D-quinovose = 6-deoxy-6-sulfo-D-fructose. In terms of biological role, part of the sulfo-TK pathway, a D-sulfoquinovose degradation pathway that produces 2-hydroxyethane-1-sulfonate (isethionate). Catalyzes the isomerization of sulfoquinovose (SQ) to 6-deoxy-6-sulfo-D-fructose (SF). In Clostridium sp. (strain MSTE9), this protein is Sulfoquinovose isomerase.